Here is a 438-residue protein sequence, read N- to C-terminus: tRNA(Ile)-lysidine synthase (438 aa).

Residue Ser19–Ser24 coordinates ATP.

It belongs to the tRNA(Ile)-lysidine synthase family.

Its subcellular location is the cytoplasm. The catalysed reaction is cytidine(34) in tRNA(Ile2) + L-lysine + ATP = lysidine(34) in tRNA(Ile2) + AMP + diphosphate + H(+). Ligates lysine onto the cytidine present at position 34 of the AUA codon-specific tRNA(Ile) that contains the anticodon CAU, in an ATP-dependent manner. Cytidine is converted to lysidine, thus changing the amino acid specificity of the tRNA from methionine to isoleucine. The polypeptide is tRNA(Ile)-lysidine synthase (Buchnera aphidicola subsp. Baizongia pistaciae (strain Bp)).